The sequence spans 121 residues: Large ribosomal subunit protein bL19 (121 aa).

This sequence belongs to the bacterial ribosomal protein bL19 family.

Its function is as follows. This protein is located at the 30S-50S ribosomal subunit interface and may play a role in the structure and function of the aminoacyl-tRNA binding site. The polypeptide is Large ribosomal subunit protein bL19 (Mesomycoplasma hyopneumoniae (strain 7448) (Mycoplasma hyopneumoniae)).